The primary structure comprises 563 residues: Chaperonin GroEL 1 (563 aa).

Residues 29–32, 86–90, glycine 413, and aspartate 492 contribute to the ATP site; these read TIGP and DGTTT. Positions 520 to 541 are disordered; the sequence is DKPEPPSAPGAEGGDPMGGMGG. Residues 530 to 541 show a composition bias toward gly residues; sequence AEGGDPMGGMGG.

Belongs to the chaperonin (HSP60) family. Forms a cylinder of 14 subunits composed of two heptameric rings stacked back-to-back. Interacts with the co-chaperonin GroES.

It localises to the cytoplasm. The catalysed reaction is ATP + H2O + a folded polypeptide = ADP + phosphate + an unfolded polypeptide.. Functionally, together with its co-chaperonin GroES, plays an essential role in assisting protein folding. The GroEL-GroES system forms a nano-cage that allows encapsulation of the non-native substrate proteins and provides a physical environment optimized to promote and accelerate protein folding. The protein is Chaperonin GroEL 1 of Prochlorococcus marinus (strain NATL1A).